Here is a 195-residue protein sequence, read N- to C-terminus: Thioredoxin reductase-like selenoprotein T (195 aa).

The first 19 residues, 1–19, serve as a signal peptide directing secretion; it reads MRLLLLLLVAASAMVRSEA. The cysteinyl-selenocysteine (Cys-Sec) cross-link spans 46–49; the sequence is CVSU. Position 49 (Sec-49) is a non-standard amino acid, selenocysteine. Residues 85-103 traverse the membrane as a helical segment; it reads IASFLSVFKLVLIGLIIVG.

Belongs to the SelWTH family. Selenoprotein T subfamily. In terms of processing, may contain a selenide-sulfide bond between Cys-46 and Sec-49. This bond is speculated to serve as redox-active pair. As to expression, ubiquitous. Highly expressed in the endocrine pancreas.

The protein localises to the endoplasmic reticulum membrane. It carries out the reaction [thioredoxin]-dithiol + NADP(+) = [thioredoxin]-disulfide + NADPH + H(+). Its function is as follows. Selenoprotein with thioredoxin reductase-like oxidoreductase activity. Protects dopaminergic neurons against oxidative stress and cell death. Involved in ADCYAP1/PACAP-induced calcium mobilization and neuroendocrine secretion. Plays a role in fibroblast anchorage and redox regulation. In gastric smooth muscle, modulates the contraction processes through the regulation of calcium release and MYLK activation. In pancreatic islets, involved in the control of glucose homeostasis, contributes to prolonged ADCYAP1/PACAP-induced insulin secretion. This is Thioredoxin reductase-like selenoprotein T from Homo sapiens (Human).